We begin with the raw amino-acid sequence, 173 residues long: MSIILGIDPGSRITGYGVIRQQGRHLQYLGSGCIRTSEKELPGRLKQIYAGVTEIITQFQPDVFAIEQVFMAKNADSALKLGQARGSAIVAAVNADLPVHEYAARLIKQAVTGTGGADKVQVQHMVQHMLKLPAKPQADAADALGVAICHANTNKTLVALAGKATSARKGRYR.

Active-site residues include D8, E67, and D139. Positions 8, 67, and 139 each coordinate Mg(2+).

This sequence belongs to the RuvC family. As to quaternary structure, homodimer which binds Holliday junction (HJ) DNA. The HJ becomes 2-fold symmetrical on binding to RuvC with unstacked arms; it has a different conformation from HJ DNA in complex with RuvA. In the full resolvosome a probable DNA-RuvA(4)-RuvB(12)-RuvC(2) complex forms which resolves the HJ. It depends on Mg(2+) as a cofactor.

Its subcellular location is the cytoplasm. It catalyses the reaction Endonucleolytic cleavage at a junction such as a reciprocal single-stranded crossover between two homologous DNA duplexes (Holliday junction).. Its function is as follows. The RuvA-RuvB-RuvC complex processes Holliday junction (HJ) DNA during genetic recombination and DNA repair. Endonuclease that resolves HJ intermediates. Cleaves cruciform DNA by making single-stranded nicks across the HJ at symmetrical positions within the homologous arms, yielding a 5'-phosphate and a 3'-hydroxyl group; requires a central core of homology in the junction. The consensus cleavage sequence is 5'-(A/T)TT(C/G)-3'. Cleavage occurs on the 3'-side of the TT dinucleotide at the point of strand exchange. HJ branch migration catalyzed by RuvA-RuvB allows RuvC to scan DNA until it finds its consensus sequence, where it cleaves and resolves the cruciform DNA. The protein is Crossover junction endodeoxyribonuclease RuvC of Vibrio campbellii (strain ATCC BAA-1116).